Consider the following 189-residue polypeptide: NADH-quinone oxidoreductase subunit B (189 aa).

The [4Fe-4S] cluster site is built by Cys-39, Cys-40, Cys-104, and Cys-135.

It belongs to the complex I 20 kDa subunit family. As to quaternary structure, NDH-1 is composed of 14 different subunits. Subunits NuoB, C, D, E, F, and G constitute the peripheral sector of the complex. The cofactor is [4Fe-4S] cluster.

The protein localises to the cell inner membrane. It carries out the reaction a quinone + NADH + 5 H(+)(in) = a quinol + NAD(+) + 4 H(+)(out). Its function is as follows. NDH-1 shuttles electrons from NADH, via FMN and iron-sulfur (Fe-S) centers, to quinones in the respiratory chain. The immediate electron acceptor for the enzyme in this species is believed to be a menaquinone. Couples the redox reaction to proton translocation (for every two electrons transferred, four hydrogen ions are translocated across the cytoplasmic membrane), and thus conserves the redox energy in a proton gradient. In Chlorobium phaeobacteroides (strain DSM 266 / SMG 266 / 2430), this protein is NADH-quinone oxidoreductase subunit B.